Consider the following 113-residue polypeptide: Large ribosomal subunit protein uL22 (113 aa).

This sequence belongs to the universal ribosomal protein uL22 family. Part of the 50S ribosomal subunit.

In terms of biological role, this protein binds specifically to 23S rRNA; its binding is stimulated by other ribosomal proteins, e.g. L4, L17, and L20. It is important during the early stages of 50S assembly. It makes multiple contacts with different domains of the 23S rRNA in the assembled 50S subunit and ribosome. Its function is as follows. The globular domain of the protein is located near the polypeptide exit tunnel on the outside of the subunit, while an extended beta-hairpin is found that lines the wall of the exit tunnel in the center of the 70S ribosome. The polypeptide is Large ribosomal subunit protein uL22 (Bacillus pumilus (strain SAFR-032)).